Consider the following 341-residue polypeptide: Tryptophan--tRNA ligase (341 aa).

Residues 11 to 13 (RPT) and 19 to 20 (GH) each bind ATP. The 'HIGH' region motif lies at 12 to 20 (PTGKLHIGH). D140 contributes to the L-tryptophan binding site. ATP contacts are provided by residues 152-154 (GED), L193, and 201-205 (KMSKS). The short motif at 201–205 (KMSKS) is the 'KMSKS' region element.

Belongs to the class-I aminoacyl-tRNA synthetase family. In terms of assembly, homodimer.

It localises to the cytoplasm. It catalyses the reaction tRNA(Trp) + L-tryptophan + ATP = L-tryptophyl-tRNA(Trp) + AMP + diphosphate + H(+). Catalyzes the attachment of tryptophan to tRNA(Trp). This chain is Tryptophan--tRNA ligase, found in Clostridium longisporum.